Here is a 306-residue protein sequence, read N- to C-terminus: Putative F-box protein At1g47300 (306 aa).

An F-box domain is found at 1–45; sequence MISDSIPKELILEIMLRLPAKSIARFHCVSKQWASMLSRPYFTEL. The tract at residues 235 to 278 is disordered; sequence DPKLLESKEEEEEEEEEEEEEEEEEEEEEEEEEEEESKEREKEK. Residues 242 to 270 show a composition bias toward acidic residues; it reads KEEEEEEEEEEEEEEEEEEEEEEEEEEEE.

This chain is Putative F-box protein At1g47300, found in Arabidopsis thaliana (Mouse-ear cress).